The sequence spans 155 residues: Large ribosomal subunit protein uL30 (155 aa).

It belongs to the universal ribosomal protein uL30 family. As to quaternary structure, part of the 50S ribosomal subunit.

In Nitrosopumilus maritimus (strain SCM1), this protein is Large ribosomal subunit protein uL30.